The primary structure comprises 105 residues: Integration host factor subunit alpha (105 aa).

The protein belongs to the bacterial histone-like protein family. In terms of assembly, heterodimer of an alpha and a beta chain.

Functionally, this protein is one of the two subunits of integration host factor, a specific DNA-binding protein that functions in genetic recombination as well as in transcriptional and translational control. In Azorhizobium caulinodans (strain ATCC 43989 / DSM 5975 / JCM 20966 / LMG 6465 / NBRC 14845 / NCIMB 13405 / ORS 571), this protein is Integration host factor subunit alpha.